The sequence spans 339 residues: tRNA pseudouridine synthase D (339 aa).

The active-site Nucleophile is aspartate 80. Positions 155 to 311 (GFPNYFTEQR…AKGFSWAFEL (157 aa)) constitute a TRUD domain.

The protein belongs to the pseudouridine synthase TruD family.

It catalyses the reaction uridine(13) in tRNA = pseudouridine(13) in tRNA. Functionally, responsible for synthesis of pseudouridine from uracil-13 in transfer RNAs. The protein is tRNA pseudouridine synthase D of Haemophilus influenzae (strain PittEE).